A 186-amino-acid polypeptide reads, in one-letter code: MATEGTGVSGLAARYATALFELADENKALDQTAQDLALLKQLMAESADLRRVVRSPLLSRSDQARAMDAVLAQVDVSGLVRQFVGLVARNRRLFALSGMIDGFLAELARRRGEQTARVVAARPLSQEQLDALTDALRRALGSKVSVDLRVDPSLIGGMVVKVGSRMIDSSVRTKLTKLKLAMKGVG.

This sequence belongs to the ATPase delta chain family. F-type ATPases have 2 components, F(1) - the catalytic core - and F(0) - the membrane proton channel. F(1) has five subunits: alpha(3), beta(3), gamma(1), delta(1), epsilon(1). CF(0) has four main subunits: a(1), b(1), b'(1) and c(10-14). The alpha and beta chains form an alternating ring which encloses part of the gamma chain. F(1) is attached to F(0) by a central stalk formed by the gamma and epsilon chains, while a peripheral stalk is formed by the delta, b and b' chains.

It is found in the cell inner membrane. Its function is as follows. F(1)F(0) ATP synthase produces ATP from ADP in the presence of a proton or sodium gradient. F-type ATPases consist of two structural domains, F(1) containing the extramembraneous catalytic core and F(0) containing the membrane proton channel, linked together by a central stalk and a peripheral stalk. During catalysis, ATP synthesis in the catalytic domain of F(1) is coupled via a rotary mechanism of the central stalk subunits to proton translocation. This protein is part of the stalk that links CF(0) to CF(1). It either transmits conformational changes from CF(0) to CF(1) or is implicated in proton conduction. The polypeptide is ATP synthase subunit delta (Rhodospirillum centenum (strain ATCC 51521 / SW)).